A 353-amino-acid polypeptide reads, in one-letter code: Melanin-concentrating hormone receptor 1 (353 aa).

Residues 1–45 (MDLQASLLSTGPNASNISDGQDNFTLAGPPPRTRSVSYINIIMPS) lie on the Extracellular side of the membrane. N-linked (GlcNAc...) asparagine glycosylation is found at asparagine 13, asparagine 16, and asparagine 23. Residues 46 to 66 (VFGTICLLGIVGNSTVIFAVV) traverse the membrane as a helical segment. Topologically, residues 67-79 (KKSKLHWCSNVPD) are cytoplasmic. A helical transmembrane segment spans residues 80–100 (IFIINLSVVDLLFLLGMPFMI). The Extracellular segment spans residues 101–116 (HQLMGNGVWHFGETMC). An intrachain disulfide couples cysteine 116 to cysteine 194. Residues 117-139 (TLITAMDANSQFTSTYILTAMAI) form a helical membrane-spanning segment. At 140–161 (DRYLATVHPISSTKFRKPSMAT) the chain is on the cytoplasmic side. The helical transmembrane segment at 162–182 (LVICLLWALSFISITPVWLYA) threads the bilayer. The Extracellular segment spans residues 183-204 (RLIPFPGGAVGCGIRLPNPDTD). Residues 205–225 (LYWFTLYQFFLAFALPFVVIT) traverse the membrane as a helical segment. The Cytoplasmic portion of the chain corresponds to 226–256 (AAYVKILQRMTSSVAPASQRSIRLRTKRVTR). A helical transmembrane segment spans residues 257-277 (TAIAICLVFFVCWAPYYVLQL). The Extracellular portion of the chain corresponds to 278–294 (TQLSISRPTLTFVYLYN). The helical transmembrane segment at 295–315 (AAISLGYANSCLNPFVYIVLC) threads the bilayer. At 316–353 (ETFRKRLVLSVKPAAQGQLRTVSNAQTADEERTESKGT) the chain is on the cytoplasmic side.

This sequence belongs to the G-protein coupled receptor 1 family. As to quaternary structure, interacts with NCDN. Expressed predominantly in the brain. Expression in brain is negatively regulated by leptin. Also found in the epithelium of the tongue and kidney.

It localises to the cell membrane. Its function is as follows. Receptor for melanin-concentrating hormone, coupled to both G proteins that inhibit adenylyl cyclase and G proteins that activate phosphoinositide hydrolysis. The protein is Melanin-concentrating hormone receptor 1 of Mus musculus (Mouse).